Reading from the N-terminus, the 520-residue chain is 2,3-bisphosphoglycerate-independent phosphoglycerate mutase (520 aa).

Residues Asp13 and Ser63 each coordinate Mn(2+). Ser63 serves as the catalytic Phosphoserine intermediate. Substrate is bound by residues His124, 154–155 (RD), Arg192, Arg198, 268–271 (RADR), and Lys342. Mn(2+)-binding residues include Asp409, His413, Asp450, His451, and His469.

The protein belongs to the BPG-independent phosphoglycerate mutase family. In terms of assembly, monomer. Mn(2+) serves as cofactor.

The catalysed reaction is (2R)-2-phosphoglycerate = (2R)-3-phosphoglycerate. It participates in carbohydrate degradation; glycolysis; pyruvate from D-glyceraldehyde 3-phosphate: step 3/5. Its function is as follows. Catalyzes the interconversion of 2-phosphoglycerate and 3-phosphoglycerate. The polypeptide is 2,3-bisphosphoglycerate-independent phosphoglycerate mutase (Colwellia psychrerythraea (strain 34H / ATCC BAA-681) (Vibrio psychroerythus)).